A 208-amino-acid polypeptide reads, in one-letter code: Uracil phosphoribosyltransferase (208 aa).

Residues Arg-78, Arg-103, and 130 to 138 (DPMLATGGS) each bind 5-phospho-alpha-D-ribose 1-diphosphate. Uracil-binding positions include Ile-193 and 198–200 (GDA). 5-phospho-alpha-D-ribose 1-diphosphate is bound at residue Asp-199.

This sequence belongs to the UPRTase family. It depends on Mg(2+) as a cofactor.

The enzyme catalyses UMP + diphosphate = 5-phospho-alpha-D-ribose 1-diphosphate + uracil. Its pathway is pyrimidine metabolism; UMP biosynthesis via salvage pathway; UMP from uracil: step 1/1. With respect to regulation, allosterically activated by GTP. In terms of biological role, catalyzes the conversion of uracil and 5-phospho-alpha-D-ribose 1-diphosphate (PRPP) to UMP and diphosphate. The sequence is that of Uracil phosphoribosyltransferase from Yersinia enterocolitica serotype O:8 / biotype 1B (strain NCTC 13174 / 8081).